We begin with the raw amino-acid sequence, 367 residues long: NADH-quinone oxidoreductase subunit D (367 aa).

The protein belongs to the complex I 49 kDa subunit family. In terms of assembly, NDH-1 is composed of 14 different subunits. Subunits NuoB, C, D, E, F, and G constitute the peripheral sector of the complex.

It localises to the cell membrane. The catalysed reaction is a quinone + NADH + 5 H(+)(in) = a quinol + NAD(+) + 4 H(+)(out). Functionally, NDH-1 shuttles electrons from NADH, via FMN and iron-sulfur (Fe-S) centers, to quinones in the respiratory chain. The immediate electron acceptor for the enzyme in this species is believed to be a menaquinone. Couples the redox reaction to proton translocation (for every two electrons transferred, four hydrogen ions are translocated across the cytoplasmic membrane), and thus conserves the redox energy in a proton gradient. The sequence is that of NADH-quinone oxidoreductase subunit D from Geobacillus kaustophilus (strain HTA426).